Here is a 225-residue protein sequence, read N- to C-terminus: tRNA (guanine-N(1)-)-methyltransferase (225 aa).

S-adenosyl-L-methionine is bound by residues glycine 112 and 132–137; that span reads IGDYVL.

Belongs to the RNA methyltransferase TrmD family. As to quaternary structure, homodimer.

It localises to the cytoplasm. It catalyses the reaction guanosine(37) in tRNA + S-adenosyl-L-methionine = N(1)-methylguanosine(37) in tRNA + S-adenosyl-L-homocysteine + H(+). In terms of biological role, specifically methylates guanosine-37 in various tRNAs. The chain is tRNA (guanine-N(1)-)-methyltransferase from Bacteroides thetaiotaomicron (strain ATCC 29148 / DSM 2079 / JCM 5827 / CCUG 10774 / NCTC 10582 / VPI-5482 / E50).